Here is a 408-residue protein sequence, read N- to C-terminus: Imidazolonepropionase (408 aa).

Residues H74 and H76 each contribute to the Fe(3+) site. Zn(2+)-binding residues include H74 and H76. 4-imidazolone-5-propanoate is bound by residues R83, Y146, and H179. Residue Y146 participates in N-formimidoyl-L-glutamate binding. H244 lines the Fe(3+) pocket. H244 serves as a coordination point for Zn(2+). Q247 provides a ligand contact to 4-imidazolone-5-propanoate. D319 provides a ligand contact to Fe(3+). Position 319 (D319) interacts with Zn(2+). Residues N321 and G323 each contribute to the N-formimidoyl-L-glutamate site. 4-imidazolone-5-propanoate is bound at residue T324.

It belongs to the metallo-dependent hydrolases superfamily. HutI family. It depends on Zn(2+) as a cofactor. The cofactor is Fe(3+).

Its subcellular location is the cytoplasm. It carries out the reaction 4-imidazolone-5-propanoate + H2O = N-formimidoyl-L-glutamate. Its pathway is amino-acid degradation; L-histidine degradation into L-glutamate; N-formimidoyl-L-glutamate from L-histidine: step 3/3. In terms of biological role, catalyzes the hydrolytic cleavage of the carbon-nitrogen bond in imidazolone-5-propanoate to yield N-formimidoyl-L-glutamate. It is the third step in the universal histidine degradation pathway. This chain is Imidazolonepropionase, found in Ralstonia nicotianae (strain ATCC BAA-1114 / GMI1000) (Ralstonia solanacearum).